We begin with the raw amino-acid sequence, 140 residues long: Cytochrome c-type biogenesis protein CcmE (140 aa).

Residues 1 to 7 (MKRKHKR) lie on the Cytoplasmic side of the membrane. The helical; Signal-anchor for type II membrane protein transmembrane segment at 8–28 (LLFVLASFCAAGCALLFILSE) threads the bilayer. Over 29–140 (LRESVSFFYT…TAPKSSPEPK (112 aa)) the chain is Periplasmic. Residues His-121 and Tyr-125 each contribute to the heme site.

The protein belongs to the CcmE/CycJ family.

The protein localises to the cell inner membrane. Functionally, heme chaperone required for the biogenesis of c-type cytochromes. Transiently binds heme delivered by CcmC and transfers the heme to apo-cytochromes in a process facilitated by CcmF and CcmH. The polypeptide is Cytochrome c-type biogenesis protein CcmE (Anaplasma marginale (strain St. Maries)).